A 1044-amino-acid chain; its full sequence is Protein ITPRID1 (1044 aa).

A compositionally biased stretch (polar residues) spans 1 to 14 (MMAQKSQGSDNLQE). Disordered regions lie at residues 1 to 20 (MMAQKSQGSDNLQEGQEKSK), 230 to 251 (EEKAGGESVQRTSVSAAKEHRR), 388 to 489 (MEEV…SSQE), and 583 to 607 (PEGAGKVQSHHNESQRSPGNDHTQD). Residues 388–398 (MEEVQSFEEET) are compositionally biased toward acidic residues. Polar residues-rich tracts occupy residues 460–469 (HSLVSSQDCQ) and 480–489 (RASMSFSSQE). The stretch at 896 to 937 (SRDMSEEEREEAEQLQTLREALRQQVAELEFQLGDRAQQIRE) forms a coiled coil.

This chain is Protein ITPRID1, found in Homo sapiens (Human).